The following is a 788-amino-acid chain: 5-methyltetrahydropteroyltriglutamate--homocysteine methyltransferase (788 aa).

Residues 24–27 (RELK) and lysine 140 contribute to the 5-methyltetrahydropteroyltri-L-glutamate site. L-homocysteine-binding positions include 463 to 465 (IGS) and glutamate 516. L-methionine-binding positions include 463–465 (IGS) and glutamate 516. Residues 547-548 (RC) and tryptophan 593 contribute to the 5-methyltetrahydropteroyltri-L-glutamate site. Aspartate 631 lines the L-homocysteine pocket. Aspartate 631 contributes to the L-methionine binding site. Glutamate 637 contacts 5-methyltetrahydropteroyltri-L-glutamate. Zn(2+) contacts are provided by histidine 673, cysteine 675, and glutamate 697. Catalysis depends on histidine 726, which acts as the Proton donor. Cysteine 758 is a binding site for Zn(2+).

It belongs to the vitamin-B12 independent methionine synthase family. Requires Zn(2+) as cofactor.

The catalysed reaction is 5-methyltetrahydropteroyltri-L-glutamate + L-homocysteine = tetrahydropteroyltri-L-glutamate + L-methionine. Its pathway is amino-acid biosynthesis; L-methionine biosynthesis via de novo pathway; L-methionine from L-homocysteine (MetE route): step 1/1. Catalyzes the transfer of a methyl group from 5-methyltetrahydrofolate to homocysteine resulting in methionine formation. The polypeptide is 5-methyltetrahydropteroyltriglutamate--homocysteine methyltransferase (Rhodopseudomonas palustris (strain ATCC BAA-98 / CGA009)).